A 300-amino-acid polypeptide reads, in one-letter code: ATP-dependent (S)-NAD(P)H-hydrate dehydratase (300 aa).

The region spanning 14–293 (LLALFKTVVP…NQIPSVFQTE (280 aa)) is the YjeF C-terminal domain. Residues Gly-114 and 167–173 (NVMEFQR) contribute to the (6S)-NADPHX site. Residues 198 to 202 (KGAND) and 219 to 228 (GSGRRCGGQG) each bind ATP. Asp-229 provides a ligand contact to (6S)-NADPHX.

The protein belongs to the NnrD/CARKD family. Mg(2+) serves as cofactor.

The enzyme catalyses (6S)-NADHX + ATP = ADP + phosphate + NADH + H(+). It carries out the reaction (6S)-NADPHX + ATP = ADP + phosphate + NADPH + H(+). In terms of biological role, catalyzes the dehydration of the S-form of NAD(P)HX at the expense of ATP, which is converted to ADP. Together with NAD(P)HX epimerase, which catalyzes the epimerization of the S- and R-forms, the enzyme allows the repair of both epimers of NAD(P)HX, a damaged form of NAD(P)H that is a result of enzymatic or heat-dependent hydration. This is ATP-dependent (S)-NAD(P)H-hydrate dehydratase from Drosophila melanogaster (Fruit fly).